The following is a 125-amino-acid chain: SAGPFRIPKCRKEFQQAQHLRACQQWLHKQAMQSGSGPQGPQQRPPLLQQCCNELHQEEPLCVCPTLKGASRAVKQQVRQQQGQQGQQLQQVISRIYQTATHLPKVCNIPQVSVCPFQKTMPGPS.

4 cysteine pairs are disulfide-bonded: cysteine 10-cysteine 62, cysteine 23-cysteine 51, cysteine 52-cysteine 107, and cysteine 64-cysteine 115.

Belongs to the 2S seed storage albumins family. In terms of assembly, the mature protein consists of a small and a large chain linked by disulfide bonds.

Functionally, the small, basic, water-soluble napins are one of the two major kinds of storage proteins synthesized in the seed during its maturation. This Brassica napus (Rape) protein is Napin-3.